The sequence spans 378 residues: Myoglobin (378 aa).

His-332 serves as a coordination point for heme.

Belongs to the indoleamine 2,3-dioxygenase family. Homodimer. It depends on heme as a cofactor.

In terms of biological role, serves a reserve supply of oxygen and facilitates the movement of oxygen within muscles. This chain is Myoglobin, found in Haliotis madaka (Giant abalone).